Consider the following 434-residue polypeptide: MNIVVVGLSHKTASVEIREKIAFAPTQMEKPLRMLIAIDDIAEAVIVSTCNRVELYASTRDVAGGMARLKRFLGDYHGVPVEVLEPHLYSHHGEAAIRHVFRVAASLDSMVVGEPQILGQIKTAYGYAAEFRTSGIILNRFLHKAFSVAKRVRTETKIASSAVSVSFAAVELARKIFGDLSDKTVMLIGAGEMCELAAKHFLNNGARGVMVTNRTYERAERLAEEFEGKAIHFEDLFDQLHKADIVLSSTGATHYIIRPKDIDEVIRRRKMKPMFFIDIAVPRDIDPKVNDVENVYLYDMDDLQNVVASNLQQRAEEAKKAEGIIEEEIGQFYKWISSLEVTPTIVALRSKFEDVRRAELEKTLSAWKDLPPDGAKRLEALTAAIVNKLLHPPTATLKRTGQGGRTDLYVDALRTLFDLQTELPEPEGSLELEE.

Substrate contacts are provided by residues 49-52 (TCNR), S109, 114-116 (EPQ), and Q120. The Nucleophile role is filled by C50. Residue 189-194 (GAGEMC) participates in NADP(+) binding.

It belongs to the glutamyl-tRNA reductase family. Homodimer.

The enzyme catalyses (S)-4-amino-5-oxopentanoate + tRNA(Glu) + NADP(+) = L-glutamyl-tRNA(Glu) + NADPH + H(+). It participates in porphyrin-containing compound metabolism; protoporphyrin-IX biosynthesis; 5-aminolevulinate from L-glutamyl-tRNA(Glu): step 1/2. In terms of biological role, catalyzes the NADPH-dependent reduction of glutamyl-tRNA(Glu) to glutamate 1-semialdehyde (GSA). This is Glutamyl-tRNA reductase from Geobacter sulfurreducens (strain ATCC 51573 / DSM 12127 / PCA).